A 488-amino-acid polypeptide reads, in one-letter code: N-acyl-D-glutamate deacylase (488 aa).

This sequence belongs to the metallo-dependent hydrolases superfamily. N-acyl-D-amino-acid deacylase family. Zn(2+) serves as cofactor.

Its subcellular location is the cytoplasm. The enzyme catalyses an N-acyl-D-glutamate + H2O = D-glutamate + a carboxylate. With respect to regulation, inhibited by cobalt, copper and EDTA. The sequence is that of N-acyl-D-glutamate deacylase from Alcaligenes xylosoxydans xylosoxydans (Achromobacter xylosoxidans).